A 219-amino-acid polypeptide reads, in one-letter code: Octanoyltransferase (219 aa).

In terms of domain architecture, BPL/LPL catalytic spans 31–206 (DEDVDQIWLV…ELVELLGYDQ (176 aa)). Residues 70-77 (RGGQVTYH), 137-139 (SLG), and 150-152 (GLA) contribute to the substrate site. The active-site Acyl-thioester intermediate is the C168.

This sequence belongs to the LipB family.

It is found in the cytoplasm. It carries out the reaction octanoyl-[ACP] + L-lysyl-[protein] = N(6)-octanoyl-L-lysyl-[protein] + holo-[ACP] + H(+). Its pathway is protein modification; protein lipoylation via endogenous pathway; protein N(6)-(lipoyl)lysine from octanoyl-[acyl-carrier-protein]: step 1/2. Catalyzes the transfer of endogenously produced octanoic acid from octanoyl-acyl-carrier-protein onto the lipoyl domains of lipoate-dependent enzymes. Lipoyl-ACP can also act as a substrate although octanoyl-ACP is likely to be the physiological substrate. In Vibrio atlanticus (strain LGP32) (Vibrio splendidus (strain Mel32)), this protein is Octanoyltransferase.